Reading from the N-terminus, the 243-residue chain is 1-(5-phosphoribosyl)-5-[(5-phosphoribosylamino)methylideneamino] imidazole-4-carboxamide isomerase (243 aa).

D8 (proton acceptor) is an active-site residue. D128 functions as the Proton donor in the catalytic mechanism.

The protein belongs to the HisA/HisF family.

It localises to the cytoplasm. It catalyses the reaction 1-(5-phospho-beta-D-ribosyl)-5-[(5-phospho-beta-D-ribosylamino)methylideneamino]imidazole-4-carboxamide = 5-[(5-phospho-1-deoxy-D-ribulos-1-ylimino)methylamino]-1-(5-phospho-beta-D-ribosyl)imidazole-4-carboxamide. Its pathway is amino-acid biosynthesis; L-histidine biosynthesis; L-histidine from 5-phospho-alpha-D-ribose 1-diphosphate: step 4/9. The protein is 1-(5-phosphoribosyl)-5-[(5-phosphoribosylamino)methylideneamino] imidazole-4-carboxamide isomerase of Opitutus terrae (strain DSM 11246 / JCM 15787 / PB90-1).